Reading from the N-terminus, the 149-residue chain is Tetracenomycin polyketide synthase protein TcmJ (149 aa).

The Cupin type-2 domain maps to 51 to 117; sequence HIELAPGESV…NRGNVPARVV (67 aa). Residues 127–149 are disordered; it reads PELGHVDTEPVPNPAAAPPKVGG.

The tetracenomycin polyketide synthase (TCM PKS) is composed of a ketosynthase complex (TcmKL), an acyl carrier protein (TcmM), a cyclase (TcmN) and a probable second cyclase (TcmJ).

It catalyses the reaction 10 malonyl-CoA + 8 H(+) = tetracenomycin F2 + 10 CO2 + 10 CoA + 2 H2O. Its pathway is antibiotic biosynthesis; tetracenomycin C biosynthesis. Its function is as follows. Involved in the biosynthesis of tetracenomycin C (TCM C). Part of a type II polyketide synthase (PKS) that catalyzes the synthesis of tetracenomycin F2 (TCM F2), a precursor of TCM C, from malonyl-CoA. TcmJ, while not absolutely required, greatly increases the tetracenomycin F2 production. It probably acts as a cyclase. In Streptomyces glaucescens, this protein is Tetracenomycin polyketide synthase protein TcmJ.